The following is a 110-amino-acid chain: uncharacterized protein (110 aa).

The interval 85–110 is disordered; sequence ARKAERPSQGGKDYNGTAKSAQSTTV. The span at 101-110 shows a compositional bias: polar residues; it reads TAKSAQSTTV.

This is an uncharacterized protein from Saccharomyces cerevisiae (strain ATCC 204508 / S288c) (Baker's yeast).